The chain runs to 301 residues: MKVVFMGSSEFSLPAFEALVSADSYDVVAVYTKAPKPAGRGYALTKTPVHICAEGKGIPVRSPVSLRAEGEESIMAEYAPDVIVVVSYGLMLPKWTLTASRMGCVNIHPSLLPRWRGAAPMQHAILSGDTVTGVTIMQINEFMDAGDIYLQEVTEIGEKENILDLSRRLSVMGSRMLLKVLDSIGSIQPIKQDESGVTIANKLEEFRIDFEEAADVICRRIRALYPKMYFMLDGSRVRVLEAESYEFAEMNIGDVINNELHIRCGGNTALVPLVVQQESKKPCDIKSFLCRFRGKSMPVVS.

110–113 (SLLP) provides a ligand contact to (6S)-5,6,7,8-tetrahydrofolate.

Belongs to the Fmt family.

The enzyme catalyses L-methionyl-tRNA(fMet) + (6R)-10-formyltetrahydrofolate = N-formyl-L-methionyl-tRNA(fMet) + (6S)-5,6,7,8-tetrahydrofolate + H(+). Its function is as follows. Attaches a formyl group to the free amino group of methionyl-tRNA(fMet). The formyl group appears to play a dual role in the initiator identity of N-formylmethionyl-tRNA by promoting its recognition by IF2 and preventing the misappropriation of this tRNA by the elongation apparatus. The protein is Methionyl-tRNA formyltransferase of Anaplasma phagocytophilum (strain HZ).